Reading from the N-terminus, the 240-residue chain is Uridylate kinase (240 aa).

Residue 13-16 participates in ATP binding; it reads KASG. The segment at 21–26 is involved in allosteric activation by GTP; that stretch reads GSQGFG. Gly-55 lines the UMP pocket. Positions 56 and 60 each coordinate ATP. UMP is bound by residues Asp-75 and 136–143; that span reads TGNPFFTT. Residues Thr-163, Gln-164, Tyr-169, and Asp-172 each coordinate ATP.

The protein belongs to the UMP kinase family. As to quaternary structure, homohexamer.

The protein resides in the cytoplasm. The enzyme catalyses UMP + ATP = UDP + ADP. It participates in pyrimidine metabolism; CTP biosynthesis via de novo pathway; UDP from UMP (UMPK route): step 1/1. With respect to regulation, allosterically activated by GTP. Inhibited by UTP. Functionally, catalyzes the reversible phosphorylation of UMP to UDP. The protein is Uridylate kinase of Brucella melitensis biotype 1 (strain ATCC 23456 / CCUG 17765 / NCTC 10094 / 16M).